A 248-amino-acid polypeptide reads, in one-letter code: Probable transcriptional regulatory protein Mnod_7401 (248 aa).

Belongs to the TACO1 family.

The protein localises to the cytoplasm. In Methylobacterium nodulans (strain LMG 21967 / CNCM I-2342 / ORS 2060), this protein is Probable transcriptional regulatory protein Mnod_7401.